The primary structure comprises 176 residues: Ribosome rescue factor SmrB (176 aa).

The Smr domain occupies 93 to 168 (LDLHGYRQSE…GDAALLVLID (76 aa)).

It belongs to the SmrB family. In terms of assembly, associates with collided ribosomes, but not with correctly translating polysomes.

Acts as a ribosome collision sensor. Detects stalled/collided disomes (pairs of ribosomes where the leading ribosome is stalled and a second ribosome has collided with it) and endonucleolytically cleaves mRNA at the 5' boundary of the stalled ribosome. Stalled/collided disomes form a new interface (primarily via the 30S subunits) that binds SmrB. Cleaved mRNA becomes available for tmRNA ligation, leading to ribosomal subunit dissociation and rescue of stalled ribosomes. This Shewanella sp. (strain W3-18-1) protein is Ribosome rescue factor SmrB.